The sequence spans 385 residues: tRNA (guanine(26)-N(2))-dimethyltransferase (385 aa).

In terms of domain architecture, Trm1 methyltransferase spans Met1 to Thr379. Positions 37, 67, 82, 108, and 109 each coordinate S-adenosyl-L-methionine. Residues Cys247, Cys250, Cys267, and Cys270 each coordinate Zn(2+).

The protein belongs to the class I-like SAM-binding methyltransferase superfamily. Trm1 family.

It carries out the reaction guanosine(26) in tRNA + 2 S-adenosyl-L-methionine = N(2)-dimethylguanosine(26) in tRNA + 2 S-adenosyl-L-homocysteine + 2 H(+). Functionally, dimethylates a single guanine residue at position 26 of a number of tRNAs using S-adenosyl-L-methionine as donor of the methyl groups. The chain is tRNA (guanine(26)-N(2))-dimethyltransferase from Haloquadratum walsbyi (strain DSM 16790 / HBSQ001).